A 450-amino-acid chain; its full sequence is Tubulin alpha chain (450 aa).

A GTP-binding site is contributed by Gln-11. Lys-40 is modified (N6-acetyllysine). GTP contacts are provided by Glu-71, Ser-140, Gly-144, Thr-145, Thr-179, Asn-206, and Asn-228. Position 71 (Glu-71) interacts with Mg(2+). Glu-254 is a catalytic residue. The tract at residues 431-450 (DYEEVGTDSVGEEDEEGEEY) is disordered.

It belongs to the tubulin family. In terms of assembly, dimer of alpha and beta chains. A typical microtubule is a hollow water-filled tube with an outer diameter of 25 nm and an inner diameter of 15 nM. Alpha-beta heterodimers associate head-to-tail to form protofilaments running lengthwise along the microtubule wall with the beta-tubulin subunit facing the microtubule plus end conferring a structural polarity. Microtubules usually have 13 protofilaments but different protofilament numbers can be found in some organisms and specialized cells. The cofactor is Mg(2+). In terms of processing, some glutamate residues at the C-terminus are polyglycylated, resulting in polyglycine chains on the gamma-carboxyl group. Glycylation is mainly limited to tubulin incorporated into axonemes (cilia and flagella) whereas glutamylation is prevalent in neuronal cells, centrioles, axonemes, and the mitotic spindle. Both modifications can coexist on the same protein on adjacent residues, and lowering polyglycylation levels increases polyglutamylation, and reciprocally. The precise function of polyglycylation is still unclear. Some glutamate residues at the C-terminus are polyglutamylated, resulting in polyglutamate chains on the gamma-carboxyl group. Polyglutamylation plays a key role in microtubule severing by spastin (SPAST). SPAST preferentially recognizes and acts on microtubules decorated with short polyglutamate tails: severing activity by SPAST increases as the number of glutamates per tubulin rises from one to eight, but decreases beyond this glutamylation threshold. Post-translationally, acetylation of alpha chains at Lys-40 is located inside the microtubule lumen. This modification has been correlated with increased microtubule stability, intracellular transport and ciliary assembly. In terms of processing, undergoes a tyrosination/detyrosination cycle, the cyclic removal and re-addition of a C-terminal tyrosine residue by the enzymes tubulin tyrosine carboxypeptidase (MATCAP, VASH1 or VASH2) and tubulin tyrosine ligase (TTL), respectively. Tyrosination promotes microtubule interaction with CAP-Gly microtubule plus-end tracking proteins. Tyrosinated tubulins regulate the initiation of dynein-driven motility. Post-translationally, detyrosination is involved in metaphase plate congression by guiding chromosomes during mitosis. Detyrosination increases microtubules-dependent mechanotransduction in dystrophic cardiac and skeletal muscle. In cardiomyocytes, detyrosinated microtubules are required to resist to contractile compression during contraction.

It is found in the cytoplasm. Its subcellular location is the cytoskeleton. The enzyme catalyses GTP + H2O = GDP + phosphate + H(+). In terms of biological role, tubulin is the major constituent of microtubules, a cylinder consisting of laterally associated linear protofilaments composed of alpha- and beta-tubulin heterodimers. Microtubules grow by the addition of GTP-tubulin dimers to the microtubule end, where a stabilizing cap forms. Below the cap, tubulin dimers are in GDP-bound state, owing to GTPase activity of alpha-tubulin. The polypeptide is Tubulin alpha chain (Oncorhynchus keta (Chum salmon)).